A 396-amino-acid polypeptide reads, in one-letter code: Deoxyguanosinetriphosphate triphosphohydrolase-like protein (396 aa).

Residues 62–198 (RLTHSLEVAQ…AALADDIAYN (137 aa)) enclose the HD domain.

This sequence belongs to the dGTPase family. Type 2 subfamily.

In Jannaschia sp. (strain CCS1), this protein is Deoxyguanosinetriphosphate triphosphohydrolase-like protein.